The chain runs to 627 residues: DNA mismatch repair protein MutL (627 aa).

A compositionally biased stretch (basic and acidic residues) spans 354 to 364 (DEKPPEKKVPE). The tract at residues 354–374 (DEKPPEKKVPEKSTAPSYSPM) is disordered.

It belongs to the DNA mismatch repair MutL/HexB family.

In terms of biological role, this protein is involved in the repair of mismatches in DNA. It is required for dam-dependent methyl-directed DNA mismatch repair. May act as a 'molecular matchmaker', a protein that promotes the formation of a stable complex between two or more DNA-binding proteins in an ATP-dependent manner without itself being part of a final effector complex. Overexpression of mutSL partially suppresses the high spontaneous mutation frequency of a ytkD/mutM/mutY triple disruption which lacks the system required to prevent damage by oxidized guanine (8-oxo-dGTP). This suggests that MutSL also functions to repair mismatches due to oxidative stress in both growing and stationary phase cells. The polypeptide is DNA mismatch repair protein MutL (Bacillus subtilis (strain 168)).